The sequence spans 198 residues: 3-isopropylmalate dehydratase small subunit (198 aa).

Belongs to the LeuD family. LeuD type 1 subfamily. Heterodimer of LeuC and LeuD.

The enzyme catalyses (2R,3S)-3-isopropylmalate = (2S)-2-isopropylmalate. It functions in the pathway amino-acid biosynthesis; L-leucine biosynthesis; L-leucine from 3-methyl-2-oxobutanoate: step 2/4. Catalyzes the isomerization between 2-isopropylmalate and 3-isopropylmalate, via the formation of 2-isopropylmaleate. In Corynebacterium jeikeium (strain K411), this protein is 3-isopropylmalate dehydratase small subunit.